Reading from the N-terminus, the 168-residue chain is uncharacterized protein (168 aa).

2 helical membrane passes run 41-61 and 133-153; these read LLPW…LFFI and KFVI…FFVL.

It localises to the cell membrane. This is an uncharacterized protein from Thermotoga maritima (strain ATCC 43589 / DSM 3109 / JCM 10099 / NBRC 100826 / MSB8).